The primary structure comprises 140 residues: ATP synthase epsilon chain (140 aa).

The protein belongs to the ATPase epsilon chain family. As to quaternary structure, F-type ATPases have 2 components, CF(1) - the catalytic core - and CF(0) - the membrane proton channel. CF(1) has five subunits: alpha(3), beta(3), gamma(1), delta(1), epsilon(1). CF(0) has three main subunits: a, b and c.

The protein resides in the cell inner membrane. In terms of biological role, produces ATP from ADP in the presence of a proton gradient across the membrane. This chain is ATP synthase epsilon chain, found in Xylella fastidiosa (strain Temecula1 / ATCC 700964).